Here is a 182-residue protein sequence, read N- to C-terminus: MTQYFRALAFFLLLVPATAMACDDWPSWARGACQRVDQIWNEGGNDLYLTGYSWHNRAMYSSDKIRSFNELAWGGGLGKSIYDEDGDWQGLYAMAFLDSHSDIEPIAGYGFQKIGRIGADTRLGIGYTVFLTSRSDIMSRVPFPGILPLVSAGYRDATLYATYIPGGKGNGNVLFMFGRWEF.

Residues 1–21 (MTQYFRALAFFLLLVPATAMA) form the signal peptide. Cysteine 22 carries the N-palmitoyl cysteine lipid modification. A lipid anchor (S-diacylglycerol cysteine) is attached at cysteine 22. Catalysis depends on residues histidine 55, aspartate 98, and serine 99.

It belongs to the lipid A palmitoyltransferase family. As to quaternary structure, homodimer.

Its subcellular location is the cell outer membrane. It carries out the reaction a lipid A + a 1,2-diacyl-sn-glycero-3-phosphocholine = a hepta-acyl lipid A + a 2-acyl-sn-glycero-3-phosphocholine. The enzyme catalyses a lipid IVA + a 1,2-diacyl-sn-glycero-3-phosphocholine = a lipid IVB + a 2-acyl-sn-glycero-3-phosphocholine. The catalysed reaction is a lipid IIA + a 1,2-diacyl-sn-glycero-3-phosphocholine = a lipid IIB + a 2-acyl-sn-glycero-3-phosphocholine. In terms of biological role, transfers a fatty acid residue from the sn-1 position of a phospholipid to the N-linked hydroxyfatty acid chain on the proximal unit of lipid A or its precursors. The chain is Lipid A acyltransferase PagP from Bordetella parapertussis (strain 12822 / ATCC BAA-587 / NCTC 13253).